A 170-amino-acid polypeptide reads, in one-letter code: Ubiquitin-conjugating enzyme E2 J2-like (170 aa).

A UBC core domain is found at 15 to 165; that stretch reads DCITRLKREF…NKTFCELFPY (151 aa). The active-site Glycyl thioester intermediate is the Cys-97.

This sequence belongs to the ubiquitin-conjugating enzyme family.

The catalysed reaction is S-ubiquitinyl-[E1 ubiquitin-activating enzyme]-L-cysteine + [E2 ubiquitin-conjugating enzyme]-L-cysteine = [E1 ubiquitin-activating enzyme]-L-cysteine + S-ubiquitinyl-[E2 ubiquitin-conjugating enzyme]-L-cysteine.. It participates in protein modification; protein ubiquitination. Its function is as follows. Catalyzes the covalent attachment of ubiquitin to other proteins. The protein is Ubiquitin-conjugating enzyme E2 J2-like of Dictyostelium discoideum (Social amoeba).